We begin with the raw amino-acid sequence, 581 residues long: Terpene synthase 2, chloroplastic (581 aa).

A chloroplast-targeting transit peptide spans 1–34; the sequence is MYSLPGATMSAAPASIISSSSFVEPLLLAAASPA. Substrate contacts are provided by R299, D336, D340, and R480. Residues D336 and D340 each coordinate Mg(2+). The DDXXD motif motif lies at 336-340; the sequence is DDIFD. Residues D483, S487, and E491 each contribute to the Mg(2+) site.

It belongs to the terpene synthase family. As to quaternary structure, monomer. Mg(2+) serves as cofactor.

The protein resides in the plastid. The protein localises to the chloroplast. It carries out the reaction (2E,6E)-farnesyl diphosphate + H2O = (3S,6E)-nerolidol + diphosphate. It catalyses the reaction (2E,6E,10E)-geranylgeranyl diphosphate + H2O = (6E,10E)-geranyllinalool + diphosphate. The enzyme catalyses (2E)-geranyl diphosphate + H2O = (S)-linalool + diphosphate. It participates in secondary metabolite biosynthesis; terpenoid biosynthesis. Its function is as follows. Involved in sesquiterpene (C15), diterpene (C20) and monoterpene (C10) biosynthesis. Has sesquiterpene synthase activity, converting farnesyl diphosphate to nerolidol, the precursor of the volatile C11-homoterpene (E)-3,8-dimethyl-1,4,7-nonatriene (DMNT). Has diterpene synthase activity, converting geranylgeranyl diphosphate to (E,E)-geranyllinalool, the precursor of the volatile C16-homoterpene (E,E)-4,8,12-trimethyltrideca 1,3,7,11-tetraene (TMTT). Has monoterpene synthase activity, converting geranyl diphosphate into linalool. Forms only the S-isomers of the three tertiary terpene alcohols. The chain is Terpene synthase 2, chloroplastic from Zea mays (Maize).